Here is a 347-residue protein sequence, read N- to C-terminus: 2-hydroxyacid dehydrogenase A (347 aa).

NAD(+) is bound by residues 157-158 (RI), Asp177, 234-236 (TSR), and Asp260. The active site involves Arg236. Glu265 is a catalytic residue.

It belongs to the D-isomer specific 2-hydroxyacid dehydrogenase family.

The catalysed reaction is a (2R)-2-hydroxycarboxylate + NADP(+) = a 2-oxocarboxylate + NADPH + H(+). Functionally, 2-hydroxyacid dehydrogenase that is capable to reduce pyruvate, hydroxypyruvate and glyoxylate in a NADPH- or NADH-dependent manner. In contrast to 2-HadhD/morA, does not recognize 4-methyl-2-oxopentanoate (MOA) as a substrate. The chain is 2-hydroxyacid dehydrogenase A from Aspergillus oryzae (strain ATCC 42149 / RIB 40) (Yellow koji mold).